A 305-amino-acid polypeptide reads, in one-letter code: Sulfate adenylyltransferase subunit 2 (305 aa).

Belongs to the PAPS reductase family. CysD subfamily. Heterodimer composed of CysD, the smaller subunit, and CysN.

The catalysed reaction is sulfate + ATP + H(+) = adenosine 5'-phosphosulfate + diphosphate. It functions in the pathway sulfur metabolism; hydrogen sulfide biosynthesis; sulfite from sulfate: step 1/3. With CysN forms the ATP sulfurylase (ATPS) that catalyzes the adenylation of sulfate producing adenosine 5'-phosphosulfate (APS) and diphosphate, the first enzymatic step in sulfur assimilation pathway. APS synthesis involves the formation of a high-energy phosphoric-sulfuric acid anhydride bond driven by GTP hydrolysis by CysN coupled to ATP hydrolysis by CysD. The polypeptide is Sulfate adenylyltransferase subunit 2 (Ectopseudomonas mendocina (strain ymp) (Pseudomonas mendocina)).